The following is a 119-amino-acid chain: Large ribosomal subunit protein bL20 (119 aa).

This sequence belongs to the bacterial ribosomal protein bL20 family.

Functionally, binds directly to 23S ribosomal RNA and is necessary for the in vitro assembly process of the 50S ribosomal subunit. It is not involved in the protein synthesizing functions of that subunit. The polypeptide is Large ribosomal subunit protein bL20 (Rhodospirillum centenum (strain ATCC 51521 / SW)).